Reading from the N-terminus, the 483-residue chain is 3-isopropylmalate dehydratase large subunit (483 aa).

The [4Fe-4S] cluster site is built by C361, C424, and C427.

The protein belongs to the aconitase/IPM isomerase family. LeuC type 1 subfamily. In terms of assembly, heterodimer of LeuC and LeuD. [4Fe-4S] cluster serves as cofactor.

The enzyme catalyses (2R,3S)-3-isopropylmalate = (2S)-2-isopropylmalate. The protein operates within amino-acid biosynthesis; L-leucine biosynthesis; L-leucine from 3-methyl-2-oxobutanoate: step 2/4. Functionally, catalyzes the isomerization between 2-isopropylmalate and 3-isopropylmalate, via the formation of 2-isopropylmaleate. The protein is 3-isopropylmalate dehydratase large subunit of Polaromonas naphthalenivorans (strain CJ2).